The primary structure comprises 238 residues: Peptidyl-tRNA hydrolase (238 aa).

Residue tyrosine 14 coordinates tRNA. Histidine 19 functions as the Proton acceptor in the catalytic mechanism. Positions 64, 66, and 112 each coordinate tRNA. The span at 190–202 (KTEEPAPKPEKKT) shows a compositional bias: basic and acidic residues. The disordered stretch occupies residues 190–225 (KTEEPAPKPEKKTVAKSHIHQARNHNQPRMPESGPM). Basic residues predominate over residues 203 to 212 (VAKSHIHQAR).

This sequence belongs to the PTH family. As to quaternary structure, monomer.

The protein resides in the cytoplasm. It carries out the reaction an N-acyl-L-alpha-aminoacyl-tRNA + H2O = an N-acyl-L-amino acid + a tRNA + H(+). In terms of biological role, hydrolyzes ribosome-free peptidyl-tRNAs (with 1 or more amino acids incorporated), which drop off the ribosome during protein synthesis, or as a result of ribosome stalling. Functionally, catalyzes the release of premature peptidyl moieties from peptidyl-tRNA molecules trapped in stalled 50S ribosomal subunits, and thus maintains levels of free tRNAs and 50S ribosomes. The chain is Peptidyl-tRNA hydrolase from Rhizobium rhizogenes (strain K84 / ATCC BAA-868) (Agrobacterium radiobacter).